A 250-amino-acid chain; its full sequence is tRNA (guanine-N(1)-)-methyltransferase (250 aa).

S-adenosyl-L-methionine is bound by residues Gly-116 and 136 to 141 (IGDYVL).

Belongs to the RNA methyltransferase TrmD family. Homodimer.

It is found in the cytoplasm. It catalyses the reaction guanosine(37) in tRNA + S-adenosyl-L-methionine = N(1)-methylguanosine(37) in tRNA + S-adenosyl-L-homocysteine + H(+). In terms of biological role, specifically methylates guanosine-37 in various tRNAs. The protein is tRNA (guanine-N(1)-)-methyltransferase of Pseudomonas savastanoi pv. phaseolicola (strain 1448A / Race 6) (Pseudomonas syringae pv. phaseolicola (strain 1448A / Race 6)).